We begin with the raw amino-acid sequence, 476 residues long: Monodehydroascorbate reductase 2, peroxisomal (476 aa).

The Cytoplasmic portion of the chain corresponds to 1–3 (MGR). Residues 4–24 (AFVHVILGGGVAAGYAALEFA) traverse the membrane as a helical segment. FAD is bound by residues 12 to 15 (GGVA), E40, R47, K52, and 146 to 147 (RN). Residues 25–447 (RRGGYSRGEL…GGLALGEKPT (423 aa)) lie on the Peroxisomal side of the membrane. NAD(+) is bound by residues 171–177 (GGYIGME), E195, R201, and G260. An NADP(+)-binding site is contributed by 173-177 (YIGME). NADP(+)-binding residues include R201 and G260. FAD is bound at residue D297. An NAD(+)-binding site is contributed by 314 to 315 (EH). 314–315 (EH) serves as a coordination point for NADP(+). An FAD-binding site is contributed by V316. L-ascorbate is bound at residue R320. Y346 lines the FAD pocket. Y346 is an NAD(+) binding site. Y346 serves as a coordination point for NADP(+). Position 348 (R348) interacts with L-ascorbate. The helical transmembrane segment at 448-468 (YVWHATAGVIAAASIAAFGYW) threads the bilayer. Residues 469–476 (YGRKRRRW) are Cytoplasmic-facing.

It belongs to the FAD-dependent oxidoreductase family. FAD is required as a cofactor.

The protein localises to the peroxisome membrane. The enzyme catalyses 2 monodehydro-L-ascorbate radical + NADH + H(+) = 2 L-ascorbate + NAD(+). Functionally, catalyzes the conversion of monodehydroascorbate to ascorbate, oxidizing NADH in the process. Ascorbate is a major antioxidant against reactive oxygen species (ROS) and nitric oxide (NO). In Oryza sativa subsp. japonica (Rice), this protein is Monodehydroascorbate reductase 2, peroxisomal.